Consider the following 130-residue polypeptide: Small ribosomal subunit protein uS8 (130 aa).

The protein belongs to the universal ribosomal protein uS8 family. As to quaternary structure, part of the 30S ribosomal subunit. Contacts proteins S5 and S12.

Functionally, one of the primary rRNA binding proteins, it binds directly to 16S rRNA central domain where it helps coordinate assembly of the platform of the 30S subunit. This Aeromonas salmonicida (strain A449) protein is Small ribosomal subunit protein uS8.